The sequence spans 453 residues: GTPase Der (453 aa).

EngA-type G domains lie at Pro4–Asp169 and Ile178–Arg353. GTP contacts are provided by residues Gly10–Ser17, Asp57–Leu61, Asn120–Glu123, Gly184–Ser191, Asp231–Ile235, and Asn296–Asp299. Positions Arg354–Lys439 constitute a KH-like domain.

It belongs to the TRAFAC class TrmE-Era-EngA-EngB-Septin-like GTPase superfamily. EngA (Der) GTPase family. Associates with the 50S ribosomal subunit.

GTPase that plays an essential role in the late steps of ribosome biogenesis. This chain is GTPase Der, found in Cyanothece sp. (strain PCC 7425 / ATCC 29141).